Consider the following 104-residue polypeptide: UPF0145 protein cbdbA1711 (104 aa).

It belongs to the UPF0145 family.

The polypeptide is UPF0145 protein cbdbA1711 (Dehalococcoides mccartyi (strain CBDB1)).